Here is a 104-residue protein sequence, read N- to C-terminus: Transcription elongation factor A protein-like 9 (104 aa).

The segment covering 1–27 (MKSCQKMEGKPENESEPKHEEEPKPEE) has biased composition (basic and acidic residues). Residues 1 to 44 (MKSCQKMEGKPENESEPKHEEEPKPEEKPEEEEKLEEEAKAKGT) form a disordered region.

The protein belongs to the TFS-II family. TFA subfamily.

It is found in the nucleus. In terms of biological role, may be involved in transcriptional regulation. In Homo sapiens (Human), this protein is Transcription elongation factor A protein-like 9.